A 432-amino-acid polypeptide reads, in one-letter code: Gamma-glutamyl phosphate reductase (432 aa).

This sequence belongs to the gamma-glutamyl phosphate reductase family.

It is found in the cytoplasm. The catalysed reaction is L-glutamate 5-semialdehyde + phosphate + NADP(+) = L-glutamyl 5-phosphate + NADPH + H(+). It participates in amino-acid biosynthesis; L-proline biosynthesis; L-glutamate 5-semialdehyde from L-glutamate: step 2/2. Functionally, catalyzes the NADPH-dependent reduction of L-glutamate 5-phosphate into L-glutamate 5-semialdehyde and phosphate. The product spontaneously undergoes cyclization to form 1-pyrroline-5-carboxylate. This is Gamma-glutamyl phosphate reductase from Methylobacterium radiotolerans (strain ATCC 27329 / DSM 1819 / JCM 2831 / NBRC 15690 / NCIMB 10815 / 0-1).